A 132-amino-acid chain; its full sequence is Homeobox protein HD-4 (132 aa).

The homeobox DNA-binding region spans 29–88 (GLSGYRYKTHIQVYVLTKIFEITQYPSHDTRQNLAILLNMSPRTIQIWFQNSRSVSRGAA). Residues 82–101 (SVSRGAAKKKVSKDNGPQEA) form a disordered region.

It is found in the nucleus. This Encephalitozoon cuniculi (strain GB-M1) (Microsporidian parasite) protein is Homeobox protein HD-4 (HD-4).